The chain runs to 207 residues: Ras-related protein Rab7 (207 aa).

Residues 15–22 (GDSSVGKT), 34–40 (SNQYKAT), 63–67 (DTAGQ), 125–128 (NKVD), and 156–157 (AK) contribute to the GTP site. The Effector region signature appears at 37–45 (YKATIGADF). 2 S-geranylgeranyl cysteine lipidation sites follow: Cys-205 and Cys-207.

This sequence belongs to the small GTPase superfamily. Rab family. In terms of tissue distribution, expressed in eye (at protein level).

It localises to the early endosome membrane. The protein localises to the late endosome membrane. The protein resides in the lysosome membrane. Its subcellular location is the cytoplasmic vesicle. It is found in the autophagosome membrane. It localises to the autolysosome membrane. The protein localises to the presynapse. The protein resides in the perikaryon. It catalyses the reaction GTP + H2O = GDP + phosphate + H(+). Functionally, small GTPase which cycles between active GTP-bound and inactive GDP-bound states. In its active state, binds to a variety of effector proteins playing a key role in the regulation of endo-lysosomal trafficking. Involved in microtubule minus and plus end-directed endosomal migration and positioning, and endosome-lysosome transport through different protein-protein interaction cascades. Governs early-to-late endosomal to lysosomal maturation. Controls endocytic cargo sorting towards the late endosome facilitating its eventual endolysosomal-mediated degradation. Together with Rab2 involved in promoting fusion of autophagosomes and endosomes with lysosomes probably through recruitment of the HOPS tethering complex. Involved in biosynthetic transport to lysosomes. Involved in establishing morphogen concentration gradients, for example of the TGF-beta homolog dpp/decapentaplegic, during pattern formation and organogenesis. Together with the Mon1-Ccz1 complex, required for autolysosome formation in fat cells and autophagic degradation during starvation-induced basal and developmental autophagy. Together with Mon1, regulates levels of postsynaptic glutamate receptor GluRIIA in the neuromuscular junction (NMJ) presynapse. Required for autophagocytosis-dependent remodeling of myofibrils and transverse-tubules (T-tubules) during metamorphosis. Involved in intracellular trafficking of the carbohydrate transporter Tret1 in glial cells of the blood brain barrier, influencing its subcellular localization and protein levels. The sequence is that of Ras-related protein Rab7 from Drosophila melanogaster (Fruit fly).